Reading from the N-terminus, the 476-residue chain is Trigger factor (476 aa).

In terms of domain architecture, PPIase FKBP-type spans 174-261; sequence GDIAVVSFKG…LKDLKEKELP (88 aa). Residues 436–476 form a disordered region; that stretch reads KENTTKTSKTTKNSKTTKATKTTKTTKTTKTSKTQNKKEKK. Positions 440–469 are enriched in low complexity; it reads TKTSKTTKNSKTTKATKTTKTTKTTKTSKT.

This sequence belongs to the FKBP-type PPIase family. Tig subfamily.

The protein resides in the cytoplasm. The enzyme catalyses [protein]-peptidylproline (omega=180) = [protein]-peptidylproline (omega=0). Functionally, involved in protein export. Acts as a chaperone by maintaining the newly synthesized protein in an open conformation. Functions as a peptidyl-prolyl cis-trans isomerase. This Prochlorococcus marinus (strain MIT 9215) protein is Trigger factor.